The sequence spans 136 residues: Large ribosomal subunit protein uL16 (136 aa).

The protein belongs to the universal ribosomal protein uL16 family. In terms of assembly, part of the 50S ribosomal subunit.

Binds 23S rRNA and is also seen to make contacts with the A and possibly P site tRNAs. This Haemophilus ducreyi (strain 35000HP / ATCC 700724) protein is Large ribosomal subunit protein uL16.